The sequence spans 1462 residues: DNA polymerase alpha catalytic subunit (1462 aa).

Disordered regions lie at residues 1 to 33 (MAPVHGDDSLSDSGSFVSSRARREKKSKKGRQE) and 98 to 123 (DLEDDALDADEKGKDGKARNKDKRNV). Over residues 20 to 29 (RARREKKSKK) the composition is skewed to basic residues. Residues 106-116 (ADEKGKDGKAR) are compositionally biased toward basic and acidic residues. Threonine 174 bears the Phosphothreonine mark. Phosphoserine occurs at positions 186, 190, and 209. Lysine 224 is subject to N6-acetyllysine. The tract at residues 232–251 (DVQVESTEEEQESGAMEFED) is disordered. A Phosphothreonine modification is found at threonine 406. Positions 650–715 (RINVCKAPHW…YHLSELVQQI (66 aa)) are DNA-binding. Position 970 is an N6-succinyllysine (lysine 970). A DNA-binding region spans residues 1245-1376 (QFRVHHYHKD…TGPLCPACMK (132 aa)). Zn(2+) contacts are provided by cysteine 1283, cysteine 1286, cysteine 1310, cysteine 1315, cysteine 1348, cysteine 1353, cysteine 1371, and cysteine 1374. The segment at 1283–1318 (CPTCGTENIYDNVFDGSGTDMEPSLYRCSNIDCKAS) adopts a CysA-type zinc-finger fold. The short motif at 1348 to 1374 (CEEPTCRNRTRHLPLQFSRTGPLCPAC) is the CysB motif element.

It belongs to the DNA polymerase type-B family. As to quaternary structure, component of the alpha DNA polymerase complex (also known as the alpha DNA polymerase-primase complex) consisting of four subunits: the catalytic subunit POLA1, the regulatory subunit POLA2, and the primase complex subunits PRIM1 and PRIM2 respectively. Interacts with PARP1; this interaction functions as part of the control of replication fork progression. Interacts with MCM10 and WDHD1; these interactions recruit the polymerase alpha complex to the pre-replicative complex bound to DNA. Interacts with RPA1; this interaction stabilizes the replicative complex and reduces the misincorporation rate of DNA polymerase alpha by acting as a fidelity clamp. (Microbial infection) Interacts with SV40 Large T antigen; this interaction allows viral DNA replication. In terms of assembly, (Microbial infection) Interacts with herpes simplex virus 1/HHV-1 replication origin-binding protein UL9. Post-translationally, a 165 kDa form is probably produced by proteolytic cleavage at Lys-124.

The protein localises to the nucleus. It localises to the cytoplasm. It is found in the cytosol. It catalyses the reaction DNA(n) + a 2'-deoxyribonucleoside 5'-triphosphate = DNA(n+1) + diphosphate. Its activity is regulated as follows. Autoinhibited in apo-primosome, where the zinc motif of POLA1 and oligonucleotide/olicosaccharide-binding domain of POLA2 are placed into the active site blocking RNA:DNA duplex entry. Functionally, catalytic subunit of the DNA polymerase alpha complex (also known as the alpha DNA polymerase-primase complex) which plays an essential role in the initiation of DNA synthesis. During the S phase of the cell cycle, the DNA polymerase alpha complex (composed of a catalytic subunit POLA1, a regulatory subunit POLA2 and two primase subunits PRIM1 and PRIM2) is recruited to DNA at the replicative forks via direct interactions with MCM10 and WDHD1. The primase subunit of the polymerase alpha complex initiates DNA synthesis by oligomerising short RNA primers on both leading and lagging strands. These primers are initially extended by the polymerase alpha catalytic subunit and subsequently transferred to polymerase delta and polymerase epsilon for processive synthesis on the lagging and leading strand, respectively. The reason this transfer occurs is because the polymerase alpha has limited processivity and lacks intrinsic 3' exonuclease activity for proofreading error, and therefore is not well suited for replicating long complexes. In the cytosol, responsible for a substantial proportion of the physiological concentration of cytosolic RNA:DNA hybrids, which are necessary to prevent spontaneous activation of type I interferon responses. The chain is DNA polymerase alpha catalytic subunit (POLA1) from Homo sapiens (Human).